A 551-amino-acid polypeptide reads, in one-letter code: Urocanate hydratase (551 aa).

NAD(+) is bound by residues 48–49 (GG), glutamine 126, 172–174 (GMG), glutamate 192, arginine 197, 238–239 (NA), 259–263 (QTSAH), 269–270 (YI), and tyrosine 318. Cysteine 406 is a catalytic residue. Glycine 488 contacts NAD(+).

It belongs to the urocanase family. Requires NAD(+) as cofactor.

The protein localises to the cytoplasm. The enzyme catalyses 4-imidazolone-5-propanoate = trans-urocanate + H2O. The protein operates within amino-acid degradation; L-histidine degradation into L-glutamate; N-formimidoyl-L-glutamate from L-histidine: step 2/3. In terms of biological role, catalyzes the conversion of urocanate to 4-imidazolone-5-propionate. This is Urocanate hydratase from Geobacillus kaustophilus (strain HTA426).